A 356-amino-acid polypeptide reads, in one-letter code: 3-isopropylmalate dehydrogenase (356 aa).

Substrate-binding residues include arginine 91, arginine 101, arginine 129, and aspartate 223. Residues aspartate 223, aspartate 247, and aspartate 251 each coordinate Mg(2+). Position 281-293 (281-293 (GSAPDIAGKGIAN)) interacts with NAD(+).

The protein belongs to the isocitrate and isopropylmalate dehydrogenases family. LeuB type 1 subfamily. In terms of assembly, homodimer. Mg(2+) is required as a cofactor. It depends on Mn(2+) as a cofactor.

It is found in the cytoplasm. The enzyme catalyses (2R,3S)-3-isopropylmalate + NAD(+) = 4-methyl-2-oxopentanoate + CO2 + NADH. It participates in amino-acid biosynthesis; L-leucine biosynthesis; L-leucine from 3-methyl-2-oxobutanoate: step 3/4. Its function is as follows. Catalyzes the oxidation of 3-carboxy-2-hydroxy-4-methylpentanoate (3-isopropylmalate) to 3-carboxy-4-methyl-2-oxopentanoate. The product decarboxylates to 4-methyl-2 oxopentanoate. The protein is 3-isopropylmalate dehydrogenase of Ralstonia nicotianae (strain ATCC BAA-1114 / GMI1000) (Ralstonia solanacearum).